A 320-amino-acid polypeptide reads, in one-letter code: Dermonecrotic toxin LarSicTox-alphaIB2a (320 aa).

A signal peptide spans 1-15; that stretch reads MSHSSTALLHPYVAA. A propeptide spanning residues 16–41 is cleaved from the precursor; the sequence is RATEKFAPIYFFCHPLQSAETDVAER. His-52 is a catalytic residue. Positions 72 and 74 each coordinate Mg(2+). His-88 acts as the Nucleophile in catalysis. Cystine bridges form between Cys-92–Cys-98 and Cys-94–Cys-237. Asp-132 lines the Mg(2+) pocket. The N-linked (GlcNAc...) asparagine glycan is linked to Asn-297.

This sequence belongs to the arthropod phospholipase D family. Class II subfamily. Mg(2+) serves as cofactor. Expressed by the venom gland.

Its subcellular location is the secreted. The catalysed reaction is an N-(acyl)-sphingosylphosphocholine = an N-(acyl)-sphingosyl-1,3-cyclic phosphate + choline. It carries out the reaction an N-(acyl)-sphingosylphosphoethanolamine = an N-(acyl)-sphingosyl-1,3-cyclic phosphate + ethanolamine. It catalyses the reaction a 1-acyl-sn-glycero-3-phosphocholine = a 1-acyl-sn-glycero-2,3-cyclic phosphate + choline. The enzyme catalyses a 1-acyl-sn-glycero-3-phosphoethanolamine = a 1-acyl-sn-glycero-2,3-cyclic phosphate + ethanolamine. In terms of biological role, dermonecrotic toxins cleave the phosphodiester linkage between the phosphate and headgroup of certain phospholipids (sphingolipid and lysolipid substrates), forming an alcohol (often choline) and a cyclic phosphate. This toxin acts on sphingomyelin (SM). It may also act on ceramide phosphoethanolamine (CPE), lysophosphatidylcholine (LPC) and lysophosphatidylethanolamine (LPE), but not on lysophosphatidylserine (LPS), and lysophosphatidylglycerol (LPG). It acts by transphosphatidylation, releasing exclusively cyclic phosphate products as second products. Induces dermonecrosis, hemolysis, increased vascular permeability, edema, inflammatory response, and platelet aggregation. In Loxosceles arizonica (Arizona brown spider), this protein is Dermonecrotic toxin LarSicTox-alphaIB2a.